A 1663-amino-acid polypeptide reads, in one-letter code: Complement C3 (1663 aa).

Residues 1 to 24 (MGPASGSQLLVLLLLLASSPLALG) form the signal peptide. At S40 the chain carries Phosphoserine. 13 disulfide bridges follow: C559–C816, C626–C661, C693–C720, C694–C727, C707–C728, C873–C1513, C1101–C1158, C1358–C1489, C1389–C1458, C1506–C1511, C1518–C1590, C1537–C1661, and C1637–C1646. S671 is subject to Phosphoserine. The Anaphylatoxin-like domain maps to 693 to 728 (CCEDGMRDIPMRYSCQRRARLITQGENCIKAFIDCC). An N-linked (GlcNAc...) asparagine glycan is attached at N939. Phosphoserine is present on S968. The segment at residues 1010–1013 (CGEQ) is a cross-link (isoglutamyl cysteine thioester (Cys-Gln)). Phosphoserine is present on S1321. The NTR domain occupies 1518 to 1661 (CFMQQSQEKI…FTESMVVYGC (144 aa)). S1573 bears the Phosphoserine mark. Residue N1617 is glycosylated (N-linked (GlcNAc...) asparagine). Residues 1634–1659 (AEECQDQKYQKQCEELGAFTESMVVY) are interaction with CFP/properdin.

As to quaternary structure, in absence of complement activation, the C3 precursor is first processed by the removal of 4 Arg residues, forming two chains, beta and alpha, linked by a disulfide bond. Complement C3b is composed of complement C3b and complement C3 beta chains that are associated via disulfide bonds. Non-enzymatic component of the C5 convertase, also named C4bC2bC3b, composed of the serine protease complement C2b (C2), complement C3b, as well as complement C4b (C4). Non-enzymatic component of the C5 convertase of the alternative complement pathways composed of the serine protease complement CFB and complement C3b. Interacts with CFP; interaction takes place together with CFB in the alternative complement system and allows the complex to become active. Interacts with CR1 (via Sushi 8 and Sushi 9 domains). Interacts with CFH. In terms of assembly, interacts with CFH. Interacts with CR2. As to quaternary structure, during pregnancy, C3dg exists as a complex (probably a 2:2:2 heterohexamer) with AGT and the proform of PRG2. Interacts with CR2 (via the N-terminal Sushi domains 1 and 2). Post-translationally, C3 precursor is first processed by the removal of 4 Arg residues, forming two chains, beta and alpha, linked by a disulfide bond. During activation of the complement systems, the alpha chain is cleaved into C3a and C3b by the C3 convertase: C3b stays linked to the beta chain, while C3a is released in the plasma. The alpha chain is cleaved by the serine protease complement C2b component of the C3 convertase to generate C3a and C3b following activation by the classical, lectin and GZMK complement systems. The alpha chain is cleaved by CFB component of the C3 convertase to generate C3a and C3b following activation by the alternative complement system. In terms of processing, C3a is further processed by carboxypeptidases to release the C-terminal arginine residue generating the acylation stimulating protein (ASP). Levels of ASP are increased in adipocytes in the postprandial period and by insulin and dietary chylomicrons. Complement C3b is rapidly split in two positions by factor I (CFI) and a cofactor (CFH) to form iC3b (inactivated C3b) and C3f which is released. CFI and CFH catalyze proteolytic degradation of already-deposited complement C3b. Then iC3b is slowly cleaved (possibly by CFI) to form C3c (beta chain + alpha' chain fragment 1 + alpha' chain fragment 2), C3dg and C3f. Other proteases produce other fragments such as C3d or C3g. Post-translationally, upon activation, the internal thioester bond reacts with carbohydrate antigens on the target surface to form amide or ester bonds, leading to covalent association with the surface of pathogens. In terms of processing, complement C3b interacts with complement C4b via a thioester linkage. Phosphorylated by FAM20C in the extracellular medium.

Its subcellular location is the secreted. The protein resides in the cell surface. Complement activation is inhibited by VSIG4. Functionally, precursor of non-enzymatic components of the classical, alternative, lectin and GZMK complement pathways, which consist in a cascade of proteins that leads to phagocytosis and breakdown of pathogens and signaling that strengthens the adaptive immune system. Non-enzymatic component of C5 convertase. Generated following cleavage by C3 convertase, it covalently attaches to the surface of pathogens, where it acts as an opsonin that marks the surface of antigens for removal. Complement C3b binds covalently via its reactive thioester, to cell surface carbohydrates or immune aggregates. Together with complement C4b, it then recruits the serine protease complement C2b to form the C5 convertase, which cleaves and activate C5, the next component of the complement pathways. In the alternative complement pathway, recruits the serine protease CFB to form the C5 convertase that cleaves and activates C5. Its function is as follows. Mediator of local inflammatory process released following cleavage by C3 convertase. Acts by binding to its receptor, C3AR1, activating G protein-coupled receptor signaling, promoting the phosphorylation, ARRB2-mediated internalization and endocytosis of C3AR1. C3a anaphylatoxin stimulates the activation of immune cells such as mast cells and basophilic leukocytes to release inflammation agents, such as cytokines, chemokines and histamine, which promote inflammation development. Also acts as potent chemoattractant for the migration of macrophages and neutrophils to the inflamed tissues, resulting in neutralization of the inflammatory triggers by multiple ways, such as phagocytosis and generation of reactive oxidants. In terms of biological role, adipogenic hormone that stimulates triglyceride synthesis and glucose transport in adipocytes, regulating fat storage and playing a role in postprandial triglyceride clearance. Appears to stimulate triglyceride synthesis via activation of the PLC, MAPK and AKT signaling pathways. Acts by binding to its receptor, C5AR2, activating G protein-coupled receptor signaling, promoting the phosphorylation, ARRB2-mediated internalization and endocytosis of C5AR2. Functionally, acts as a chemoattractant for neutrophils in chronic inflammation. The protein is Complement C3 of Mus musculus (Mouse).